A 125-amino-acid chain; its full sequence is Large ribosomal subunit protein bL12 (125 aa).

Belongs to the bacterial ribosomal protein bL12 family. Homodimer. Part of the ribosomal stalk of the 50S ribosomal subunit. Forms a multimeric L10(L12)X complex, where L10 forms an elongated spine to which 2 to 4 L12 dimers bind in a sequential fashion. Binds GTP-bound translation factors.

In terms of biological role, forms part of the ribosomal stalk which helps the ribosome interact with GTP-bound translation factors. Is thus essential for accurate translation. This is Large ribosomal subunit protein bL12 from Methylobacterium radiotolerans (strain ATCC 27329 / DSM 1819 / JCM 2831 / NBRC 15690 / NCIMB 10815 / 0-1).